The chain runs to 186 residues: Nucleoside diphosphate kinase 6 (186 aa).

ATP is bound by residues Lys19, Phe68, Arg96, Thr102, Arg116, and Asn126. His129 acts as the Pros-phosphohistidine intermediate in catalysis.

Belongs to the NDK family. Requires Mg(2+) as cofactor. In terms of tissue distribution, expressed at a moderately low level in many tissues. Most abundant in kidney, prostate, ovary, intestine, and spleen.

The enzyme catalyses a 2'-deoxyribonucleoside 5'-diphosphate + ATP = a 2'-deoxyribonucleoside 5'-triphosphate + ADP. It carries out the reaction a ribonucleoside 5'-diphosphate + ATP = a ribonucleoside 5'-triphosphate + ADP. Its function is as follows. Major role in the synthesis of nucleoside triphosphates other than ATP. The ATP gamma phosphate is transferred to the NDP beta phosphate via a ping-pong mechanism, using a phosphorylated active-site intermediate. Inhibitor of p53-induced apoptosis. In Homo sapiens (Human), this protein is Nucleoside diphosphate kinase 6 (NME6).